Consider the following 199-residue polypeptide: Crossover junction endodeoxyribonuclease RuvC (199 aa).

Catalysis depends on residues Asp-17, Glu-76, and Asp-148. Positions 17, 76, and 148 each coordinate Mg(2+).

This sequence belongs to the RuvC family. As to quaternary structure, homodimer which binds Holliday junction (HJ) DNA. The HJ becomes 2-fold symmetrical on binding to RuvC with unstacked arms; it has a different conformation from HJ DNA in complex with RuvA. In the full resolvosome a probable DNA-RuvA(4)-RuvB(12)-RuvC(2) complex forms which resolves the HJ. It depends on Mg(2+) as a cofactor.

It localises to the cytoplasm. The catalysed reaction is Endonucleolytic cleavage at a junction such as a reciprocal single-stranded crossover between two homologous DNA duplexes (Holliday junction).. Functionally, the RuvA-RuvB-RuvC complex processes Holliday junction (HJ) DNA during genetic recombination and DNA repair. Endonuclease that resolves HJ intermediates. Cleaves cruciform DNA by making single-stranded nicks across the HJ at symmetrical positions within the homologous arms, yielding a 5'-phosphate and a 3'-hydroxyl group; requires a central core of homology in the junction. The consensus cleavage sequence is 5'-(A/T)TT(C/G)-3'. Cleavage occurs on the 3'-side of the TT dinucleotide at the point of strand exchange. HJ branch migration catalyzed by RuvA-RuvB allows RuvC to scan DNA until it finds its consensus sequence, where it cleaves and resolves the cruciform DNA. In Mannheimia succiniciproducens (strain KCTC 0769BP / MBEL55E), this protein is Crossover junction endodeoxyribonuclease RuvC.